We begin with the raw amino-acid sequence, 1522 residues long: Dicer-like protein 1 (1522 aa).

A compositionally biased stretch (acidic residues) spans 1–12 (MTWAGDVEEQDD). A disordered region spans residues 1 to 37 (MTWAGDVEEQDDYFSCSDVSTSGDRRKRAPQTVTQEE). Residues 76 to 258 (LFLRAKMQNT…EHVREAAREL (183 aa)) enclose the Helicase ATP-binding domain. An ATP-binding site is contributed by 89–96 (LDTGTGKT). Positions 202–205 (DEAH) match the DEAH box motif. One can recognise a Helicase C-terminal domain in the interval 408-576 (WLNLYYERTT…DVEQEKAELI (169 aa)). The 101-residue stretch at 600-700 (SLSILSHFVA…LPTISKYLPA (101 aa)) folds into the Dicer dsRNA-binding fold domain. Positions 859 to 980 (PFWKWSPQSR…ICPEPLHISN (122 aa)) constitute a PAZ domain. 2 consecutive RNase III domains span residues 995–1166 (IIHR…MQHH) and 1222–1373 (AHKI…VDSE). Glutamate 1262, aspartate 1359, and glutamate 1362 together coordinate Mg(2+). One can recognise a DRBM domain in the interval 1409-1478 (TRLSRLLSIN…SHAALEKLEG (70 aa)). Zn(2+) contacts are provided by cysteine 1421, histidine 1449, cysteine 1490, and cysteine 1492.

It belongs to the helicase family. Dicer subfamily. Requires Mg(2+) as cofactor. Mn(2+) serves as cofactor.

Functionally, dicer-like endonuclease involved in cleaving double-stranded RNA in the RNA interference (RNAi) pathway. Produces 21 to 25 bp dsRNAs (siRNAs) which target the selective destruction of homologous RNAs leading to sequence-specific suppression of gene expression, called post-transcriptional gene silencing (PTGS). Part of a broad host defense response against viral infection and transposons. The chain is Dicer-like protein 1 (DCL1) from Phaeosphaeria nodorum (strain SN15 / ATCC MYA-4574 / FGSC 10173) (Glume blotch fungus).